Consider the following 117-residue polypeptide: Large ribosomal subunit protein bL20 (117 aa).

Belongs to the bacterial ribosomal protein bL20 family.

Binds directly to 23S ribosomal RNA and is necessary for the in vitro assembly process of the 50S ribosomal subunit. It is not involved in the protein synthesizing functions of that subunit. The polypeptide is Large ribosomal subunit protein bL20 (Pelotomaculum thermopropionicum (strain DSM 13744 / JCM 10971 / SI)).